The chain runs to 197 residues: Putative RNA-binding protein EEED8.12 (197 aa).

Residues 61–138 form the RRM domain; sequence KSVFIGNVDF…RPIVVTAKRT (78 aa). The disordered stretch occupies residues 142–166; sequence GMGHGVRGSSRGTFGRGRGAARGAP.

The polypeptide is Putative RNA-binding protein EEED8.12 (Caenorhabditis elegans).